A 397-amino-acid chain; its full sequence is Lysophospholipid transporter LplT (397 aa).

Over 1–17 the chain is Periplasmic; sequence MSESVHTNTSLWSKGMK. Residues 18–38 traverse the membrane as a helical segment; sequence AVIVAQFLSAFGDNALLFATL. The Cytoplasmic portion of the chain corresponds to 39–52; sequence ALLKAQFYPEWSQP. The chain crosses the membrane as a helical span at residues 53–73; it reads ILQMVFVGAYILFAPFVGQVA. The Periplasmic segment spans residues 74 to 90; it reads DSFAKGRVMMFANGLKL. Residues 91–111 form a helical membrane-spanning segment; that stretch reads LGAASICFGINPFLGYTLVGV. The Cytoplasmic segment spans residues 112–144; that stretch reads GAAAYSPAKYGILGELTTGSKLVKANGLMEAST. Residues 145 to 165 traverse the membrane as a helical segment; the sequence is IAAILLGSVAGGVLADWHVLV. Position 166 (A166) is a topological domain, periplasmic. Residues 167–187 traverse the membrane as a helical segment; sequence LAACALAYGGAVVANIYIPKL. Over 188-226 the chain is Cytoplasmic; sequence AAARPGQSWNLINMTRSFLNACTSLWRNGETRFSLVGTS. A helical membrane pass occupies residues 227–247; sequence LFWGAGVTLRFLLVLWVPVAL. Residues 248-256 lie on the Periplasmic side of the membrane; it reads GITDNATPT. A helical transmembrane segment spans residues 257 to 277; the sequence is YLNAMVAIGIVVGAGAAAKLV. Residues 278–280 are Cytoplasmic-facing; sequence TLE. Residues 281–301 form a helical membrane-spanning segment; it reads TVSRCMPAGILIGVVVLIFSL. Residues 302–304 lie on the Periplasmic side of the membrane; it reads QHE. Residues 305–325 form a helical membrane-spanning segment; that stretch reads LLPAYALLMLIGVMGGFFVVP. Topologically, residues 326-343 are cytoplasmic; it reads LNALLQERGKKSVGAGNA. Residues 344–364 form a helical membrane-spanning segment; it reads IAVQNLGENSAMLLMLGIYSL. At 365–366 the chain is on the periplasmic side; sequence AV. The helical transmembrane segment at 367-387 threads the bilayer; the sequence is MIGIPVVPIGIGFGALFALAI. Over 388-397 the chain is Cytoplasmic; sequence TALWIWQRRH.

It belongs to the major facilitator superfamily. LplT (TC 2.A.1.42) family.

It localises to the cell inner membrane. Functionally, catalyzes the facilitated diffusion of 2-acyl-glycero-3-phosphoethanolamine (2-acyl-GPE) into the cell. The protein is Lysophospholipid transporter LplT of Escherichia coli O8 (strain IAI1).